The chain runs to 193 residues: Ras-like protein 2 (193 aa).

12–19 (GGGGVGKS) is a binding site for GTP. Residues 34–42 (YDPTIEDSY) carry the Effector region motif. GTP contacts are provided by residues 59 to 63 (DTAGQ) and 118 to 121 (NKCD). Residue C190 is modified to Cysteine methyl ester. A lipid anchor (S-geranylgeranyl cysteine) is attached at C190. The propeptide at 191-193 (KLL) is removed in mature form.

It belongs to the small GTPase superfamily. Ras family.

It is found in the cell membrane. It catalyses the reaction GTP + H2O = GDP + phosphate + H(+). Its function is as follows. Ras proteins bind GDP/GTP and possess intrinsic GTPase activity. This Physarum polycephalum (Slime mold) protein is Ras-like protein 2 (RAS-2).